Here is a 455-residue protein sequence, read N- to C-terminus: Glutamyl-tRNA reductase (455 aa).

Residues 49–52 (TCNR), S109, 114–116 (EAQ), and Q120 each bind substrate. C50 serves as the catalytic Nucleophile. 190–195 (GAGAMG) contacts NADP(+).

The protein belongs to the glutamyl-tRNA reductase family. As to quaternary structure, homodimer.

The catalysed reaction is (S)-4-amino-5-oxopentanoate + tRNA(Glu) + NADP(+) = L-glutamyl-tRNA(Glu) + NADPH + H(+). Its pathway is porphyrin-containing compound metabolism; protoporphyrin-IX biosynthesis; 5-aminolevulinate from L-glutamyl-tRNA(Glu): step 1/2. Functionally, catalyzes the NADPH-dependent reduction of glutamyl-tRNA(Glu) to glutamate 1-semialdehyde (GSA). The sequence is that of Glutamyl-tRNA reductase from Salinispora arenicola (strain CNS-205).